The chain runs to 336 residues: GTP 3',8-cyclase (336 aa).

The Radical SAM core domain maps to 16–241 (AYRRTYYYLR…QSKGITDGPA (226 aa)). Position 25 (arginine 25) interacts with GTP. [4Fe-4S] cluster-binding residues include cysteine 32 and cysteine 36. Tyrosine 38 is an S-adenosyl-L-methionine binding site. Position 39 (cysteine 39) interacts with [4Fe-4S] cluster. Arginine 75 lines the GTP pocket. Residue glycine 79 participates in S-adenosyl-L-methionine binding. Threonine 106 is a binding site for GTP. Serine 130 lines the S-adenosyl-L-methionine pocket. Residue lysine 167 coordinates GTP. Methionine 201 serves as a coordination point for S-adenosyl-L-methionine. Residues cysteine 264 and cysteine 267 each coordinate [4Fe-4S] cluster. 269–271 (RLR) lines the GTP pocket. A [4Fe-4S] cluster-binding site is contributed by cysteine 281.

It belongs to the radical SAM superfamily. MoaA family. As to quaternary structure, monomer and homodimer. [4Fe-4S] cluster serves as cofactor.

It carries out the reaction GTP + AH2 + S-adenosyl-L-methionine = (8S)-3',8-cyclo-7,8-dihydroguanosine 5'-triphosphate + 5'-deoxyadenosine + L-methionine + A + H(+). The protein operates within cofactor biosynthesis; molybdopterin biosynthesis. Functionally, catalyzes the cyclization of GTP to (8S)-3',8-cyclo-7,8-dihydroguanosine 5'-triphosphate. This chain is GTP 3',8-cyclase, found in Actinobacillus succinogenes (strain ATCC 55618 / DSM 22257 / CCUG 43843 / 130Z).